Here is a 1612-residue protein sequence, read N- to C-terminus: Roundabout homolog 1 (1612 aa).

Residues M1–G19 form the signal peptide. The Extracellular segment spans residues S20–P858. Ig-like C2-type domains follow at residues P29–E125, D131–T218, P223–T307, P312–T407, and P416–E502. C50 and C108 are oxidised to a cystine. N-linked (GlcNAc...) asparagine glycosylation is present at N121. 3 disulfide bridges follow: C152–C201, C244–C291, and C333–C389. N424 carries N-linked (GlcNAc...) asparagine glycosylation. Cysteines 437 and 486 form a disulfide. Fibronectin type-III domains follow at residues A524 to V618, V637 to E734, and P739 to H835. N-linked (GlcNAc...) asparagine glycosylation is found at N751, N781, and N788. A helical transmembrane segment spans residues A859 to L879. The Cytoplasmic segment spans residues Y880–S1612. S901 is subject to Phosphoserine. T909 is subject to Phosphothreonine. Y999 is subject to Phosphotyrosine. S1016 bears the Phosphoserine mark. Position 1034 is a phosphotyrosine (Y1034). The tract at residues S1045–P1068 is disordered. The residue at position 1075 (Y1075) is a Phosphotyrosine. 3 disordered regions span residues R1088 to E1298, E1313 to F1358, and R1381 to S1612. The span at P1098 to T1107 shows a compositional bias: polar residues. Residues G1108–Q1124 show a composition bias toward low complexity. Residues L1147–H1157 show a composition bias toward pro residues. T1201 carries the phosphothreonine modification. Polar residues predominate over residues Y1216–E1230. Positions D1242–R1254 are enriched in basic and acidic residues. Pro residues predominate over residues V1257–P1268. S1258 is modified (phosphoserine). Over residues M1283–M1297 the composition is skewed to acidic residues. Low complexity predominate over residues S1345–F1358. Positions P1399–S1412 are enriched in polar residues. The segment covering R1420–H1431 has biased composition (basic residues). The segment covering L1441 to I1451 has biased composition (pro residues). 2 stretches are compositionally biased toward basic and acidic residues: residues A1477–T1502 and D1510–P1534. Residues F1553–P1562 show a composition bias toward polar residues. Positions S1563 to S1575 are enriched in low complexity. Over residues N1603–S1612 the composition is skewed to acidic residues.

The protein belongs to the immunoglobulin superfamily. ROBO family. As to quaternary structure, homodimer. Dimerization is mediated by the extracellular domain and is independent of SLIT liganding. Interacts with SLIT1 Interacts with SLIT2. Interacts with FLRT3. Interacts with MYO9B (via Rho-GAP domain). Ubiquitinated. May be deubiquitinated by USP33. As to expression, detected in embryonic thalamus neurons (at protein level). Expressed in embryonal spinal cord. Expressed in embryonal lung, and in adult lung bronchial epithelial cells of large proximal airways.

The protein resides in the cell membrane. The protein localises to the cell projection. Its subcellular location is the axon. It is found in the endoplasmic reticulum-Golgi intermediate compartment membrane. Its function is as follows. Receptor for SLIT1 and SLIT2 that mediates cellular responses to molecular guidance cues in cellular migration, including axonal navigation at the ventral midline of the neural tube and projection of axons to different regions during neuronal development. Interaction with the intracellular domain of FLRT3 mediates axon attraction towards cells expressing NTN1. In axon growth cones, the silencing of the attractive effect of NTN1 by SLIT2 may require the formation of a ROBO1-DCC complex. Plays a role in the regulation of cell migration via its interaction with MYO9B; inhibits MYO9B-mediated stimulation of RHOA GTPase activity, and thereby leads to increased levels of active, GTP-bound RHOA. May be required for lung development. This is Roundabout homolog 1 (Robo1) from Mus musculus (Mouse).